Consider the following 608-residue polypeptide: Nuclear receptor subfamily 2 group C member 1 (608 aa).

Residues 1–179 (MASIEEIAHQ…RLQRCIAFGM (179 aa)) form a required for interaction with KAT2B region. A DNA-binding region (nuclear receptor) is located at residues 111–186 (FDLCVVCGDK…FGMKQDSVQC (76 aa)). 2 consecutive NR C4-type zinc fingers follow at residues 114–134 (CVVC…CEGC) and 150–169 (CRGS…CQYC). Phosphoserine is present on residues S198 and S216. Position 221 is a phosphothreonine (T221). The residue at position 223 (T223) is a Phosphothreonine; by MAPK1. K251 is covalently cross-linked (Glycyl lysine isopeptide (Lys-Gly) (interchain with G-Cter in SUMO); alternate). K251 participates in a covalent cross-link: Glycyl lysine isopeptide (Lys-Gly) (interchain with G-Cter in SUMO2); alternate. The region spanning 353–595 (GNVHLIAGDS…SVIPHILKME (243 aa)) is the NR LBD domain. Residue S586 is modified to Phosphoserine; by PKC. The interval 589–608 (PHILKMEPADYNSQIIGHSI) is required for interaction with NRIP1. Residue K593 forms a Glycyl lysine isopeptide (Lys-Gly) (interchain with G-Cter in SUMO2) linkage.

Belongs to the nuclear hormone receptor family. NR2 subfamily. In terms of assembly, homodimer. Heterodimer; with NR2C2 which is required for chromatin remodeling and for binding to promoter regions such as globin DR1 repeats. Interacts with ESR1; the interaction prevents homodimerization of ESR1 and suppresses its transcriptional activity and cell growth. Interacts with NRIP1 (via its LXXLL motifs); the interaction provides corepressor activity. Interacts with HDAC3 (via the DNA-binding domain); the interaction recruits phosphorylated NR2C1 to PML bodies for sumoylation. Interacts with HDAC4 (via the DNA-binding domain). Interacts with PIAS1; the interaction is required for sumoylation of NR2C1. Interacts with UBE2I; the interaction is required for sumoylation of NR2C1. Interacts with KAT2B; the interaction acts as a corepressor of gene expression. Post-translationally, sumoylation requires both PIAS1 and UBE2I. Sumoylation appears to dissociate NR2C1 from the PML nuclear bodies. Enhances the interaction with NRIP1 but inhibits interaction with KAT2B. In proliferating cells, stimulation by all-trans retinoic acid, activation of MAPK1-mediated phosphorylation and recruitment to PML bodies with subsequent sumoylation, suppresses OCT4 expression. In terms of processing, phosphorylated on several serine and threonine residues. Phosphorylation on Thr-223, stimulated by all-trans retinoic acid (atRA) mediates PML location and sumoylation in proliferating cells which then modulates its association with effector molecules, KAT2B and NRIP1. Phosphorylation on Ser-586 by PKC is important for protein stability and function as activator of RARB.

It localises to the nucleus. It is found in the PML body. Functionally, orphan nuclear receptor. Binds the IR7 element in the promoter of its own gene in an autoregulatory negative feedback mechanism. Primarily repressor of a broad range of genes including ESR1 and RARB. Together with NR2C2, forms the core of the DRED (direct repeat erythroid-definitive) complex that represses embryonic and fetal globin transcription. Binds to hormone response elements (HREs) consisting of two 5'-AGGTCA-3' half site direct repeat consensus sequences. Also activator of OCT4 gene expression. Plays a fundamental role in early embryogenesis and regulates embryonic stem cell proliferation and differentiation. Mediator of retinoic acid-regulated preadipocyte proliferation. The sequence is that of Nuclear receptor subfamily 2 group C member 1 (NR2C1) from Bos taurus (Bovine).